The following is a 400-amino-acid chain: Bifunctional enzyme IspD/IspF (400 aa).

The tract at residues 1-235 (MSLWTVLLAA…LAEAAAPPVP (235 aa)) is 2-C-methyl-D-erythritol 4-phosphate cytidylyltransferase. Residues 236–400 (VTGYGYDVHR…VALVSGWRRP (165 aa)) are 2-C-methyl-D-erythritol 2,4-cyclodiphosphate synthase. Aspartate 242 and histidine 244 together coordinate a divalent metal cation. Residues 242–244 (DVH) and 276–277 (HS) contribute to the 4-CDP-2-C-methyl-D-erythritol 2-phosphate site. A divalent metal cation is bound at residue histidine 284. 4-CDP-2-C-methyl-D-erythritol 2-phosphate-binding positions include 298 to 300 (DIG), 303 to 307 (FPDSN), 374 to 377 (TTEE), and phenylalanine 381.

It in the N-terminal section; belongs to the IspD/TarI cytidylyltransferase family. IspD subfamily. The protein in the C-terminal section; belongs to the IspF family. A divalent metal cation is required as a cofactor.

It catalyses the reaction 2-C-methyl-D-erythritol 4-phosphate + CTP + H(+) = 4-CDP-2-C-methyl-D-erythritol + diphosphate. It carries out the reaction 4-CDP-2-C-methyl-D-erythritol 2-phosphate = 2-C-methyl-D-erythritol 2,4-cyclic diphosphate + CMP. It functions in the pathway isoprenoid biosynthesis; isopentenyl diphosphate biosynthesis via DXP pathway; isopentenyl diphosphate from 1-deoxy-D-xylulose 5-phosphate: step 2/6. Its pathway is isoprenoid biosynthesis; isopentenyl diphosphate biosynthesis via DXP pathway; isopentenyl diphosphate from 1-deoxy-D-xylulose 5-phosphate: step 4/6. In terms of biological role, bifunctional enzyme that catalyzes the formation of 4-diphosphocytidyl-2-C-methyl-D-erythritol from CTP and 2-C-methyl-D-erythritol 4-phosphate (MEP) (IspD), and catalyzes the conversion of 4-diphosphocytidyl-2-C-methyl-D-erythritol 2-phosphate (CDP-ME2P) to 2-C-methyl-D-erythritol 2,4-cyclodiphosphate (ME-CPP) with a corresponding release of cytidine 5-monophosphate (CMP) (IspF). In Solidesulfovibrio magneticus (strain ATCC 700980 / DSM 13731 / RS-1) (Desulfovibrio magneticus), this protein is Bifunctional enzyme IspD/IspF.